The primary structure comprises 389 residues: Chalcone synthase 2 (389 aa).

The active site involves cysteine 164.

This sequence belongs to the thiolase-like superfamily. Chalcone/stilbene synthases family.

The enzyme catalyses (E)-4-coumaroyl-CoA + 3 malonyl-CoA + 3 H(+) = 2',4,4',6'-tetrahydroxychalcone + 3 CO2 + 4 CoA. It participates in secondary metabolite biosynthesis; flavonoid biosynthesis. Functionally, the primary product of this enzyme is 4,2',4',6'-tetrahydroxychalcone (also termed naringenin-chalcone or chalcone) which can under specific conditions spontaneously isomerize into naringenin. The protein is Chalcone synthase 2 (CHS2) of Pisum sativum (Garden pea).